Here is a 445-residue protein sequence, read N- to C-terminus: Methylenetetrahydrofolate--tRNA-(uracil-5-)-methyltransferase TrmFO (445 aa).

Position 10-15 (10-15) interacts with FAD; sequence GGGLSG.

Belongs to the MnmG family. TrmFO subfamily. Requires FAD as cofactor.

The protein localises to the cytoplasm. The catalysed reaction is uridine(54) in tRNA + (6R)-5,10-methylene-5,6,7,8-tetrahydrofolate + NADH + H(+) = 5-methyluridine(54) in tRNA + (6S)-5,6,7,8-tetrahydrofolate + NAD(+). The enzyme catalyses uridine(54) in tRNA + (6R)-5,10-methylene-5,6,7,8-tetrahydrofolate + NADPH + H(+) = 5-methyluridine(54) in tRNA + (6S)-5,6,7,8-tetrahydrofolate + NADP(+). Functionally, catalyzes the folate-dependent formation of 5-methyl-uridine at position 54 (M-5-U54) in all tRNAs. The chain is Methylenetetrahydrofolate--tRNA-(uracil-5-)-methyltransferase TrmFO from Lawsonia intracellularis (strain PHE/MN1-00).